The following is a 287-amino-acid chain: Acetyl-coenzyme A carboxylase carboxyl transferase subunit beta (287 aa).

One can recognise a CoA carboxyltransferase N-terminal domain in the interval 28-287 (LWKKCPKCEN…ILSLLTNKVA (260 aa)). Zn(2+)-binding residues include C32, C35, C51, and C54. The segment at 32-54 (CPKCENVLYRPELEKNLDVCPKC) adopts a C4-type zinc-finger fold.

It belongs to the AccD/PCCB family. Acetyl-CoA carboxylase is a heterohexamer composed of biotin carboxyl carrier protein (AccB), biotin carboxylase (AccC) and two subunits each of ACCase subunit alpha (AccA) and ACCase subunit beta (AccD). It depends on Zn(2+) as a cofactor.

Its subcellular location is the cytoplasm. It carries out the reaction N(6)-carboxybiotinyl-L-lysyl-[protein] + acetyl-CoA = N(6)-biotinyl-L-lysyl-[protein] + malonyl-CoA. The protein operates within lipid metabolism; malonyl-CoA biosynthesis; malonyl-CoA from acetyl-CoA: step 1/1. In terms of biological role, component of the acetyl coenzyme A carboxylase (ACC) complex. Biotin carboxylase (BC) catalyzes the carboxylation of biotin on its carrier protein (BCCP) and then the CO(2) group is transferred by the transcarboxylase to acetyl-CoA to form malonyl-CoA. This is Acetyl-coenzyme A carboxylase carboxyl transferase subunit beta from Marinomonas sp. (strain MWYL1).